An 808-amino-acid polypeptide reads, in one-letter code: Sucrose synthase 1 (808 aa).

The GT-B glycosyltransferase stretch occupies residues 277–754; sequence MVFNVVILSP…GLQRIEEKYT (478 aa).

This sequence belongs to the glycosyltransferase 1 family. Plant sucrose synthase subfamily. Homotetramer. As to expression, expressed in the phloem of leaves and in roots. Detected in the whole plant but more precisely confined to the vasculature in cotyledons, mature leaves and siliques.

The catalysed reaction is an NDP-alpha-D-glucose + D-fructose = a ribonucleoside 5'-diphosphate + sucrose + H(+). In terms of biological role, sucrose-cleaving enzyme that provides UDP-glucose and fructose for various metabolic pathways. The chain is Sucrose synthase 1 (SUS1) from Arabidopsis thaliana (Mouse-ear cress).